Here is a 235-residue protein sequence, read N- to C-terminus: Probable inactive serine protease 37 (235 aa).

A signal peptide spans 1–19 (MKFIFYLSVLTGTFLFADS). The region spanning 20–233 (SVQKEDPAPY…YVSWIENTAK (214 aa)) is the Peptidase S1 domain. Intrachain disulfides connect C40/C56, C131/C198, and C163/C177.

The protein belongs to the peptidase S1 family.

The protein resides in the cytoplasmic vesicle. The protein localises to the secretory vesicle. It localises to the acrosome. It is found in the secreted. In terms of biological role, plays a role in male fertility. May have a role in sperm migration or binding to zona-intact eggs. Involved in the activation of the proacrosin/acrosin system. This Macaca fascicularis (Crab-eating macaque) protein is Probable inactive serine protease 37.